A 326-amino-acid polypeptide reads, in one-letter code: Thioredoxin reductase (326 aa).

40–47 (TGNNKGGQ) is an FAD binding site. Cysteines 141 and 144 form a disulfide. 291 to 300 (DVIDHVYKQA) contacts FAD.

This sequence belongs to the class-II pyridine nucleotide-disulfide oxidoreductase family. In terms of assembly, homodimer. The cofactor is FAD.

It localises to the cytoplasm. The enzyme catalyses [thioredoxin]-dithiol + NADP(+) = [thioredoxin]-disulfide + NADPH + H(+). In Buchnera aphidicola subsp. Baizongia pistaciae (strain Bp), this protein is Thioredoxin reductase (trxB).